The following is a 563-amino-acid chain: Eukaryotic translation initiation factor 3 subunit D-1 (563 aa).

Residues 98-167 (VQKPPHQRGR…GPPPKMRESS (70 aa)) form a disordered region. Over residues 100-121 (KPPHQRGRFRNMRNSRSGRGRN) the composition is skewed to basic residues. Threonine 128 bears the Phosphothreonine mark. The interval 291 to 305 (EFDLLTVNETSVEPP) is RNA gate.

Belongs to the eIF-3 subunit D family. As to quaternary structure, component of the eukaryotic translation initiation factor 3 (eIF-3) complex. The eIF-3 complex interacts with pix.

It is found in the cytoplasm. Functionally, mRNA cap-binding component of the eukaryotic translation initiation factor 3 (eIF-3) complex, which is involved in protein synthesis of a specialized repertoire of mRNAs and, together with other initiation factors, stimulates binding of mRNA and methionyl-tRNAi to the 40S ribosome. The eIF-3 complex specifically targets and initiates translation of a subset of mRNAs involved in cell proliferation. In the eIF-3 complex, eif3d specifically recognizes and binds the 7-methylguanosine cap of a subset of mRNAs. The protein is Eukaryotic translation initiation factor 3 subunit D-1 of Drosophila virilis (Fruit fly).